The following is a 262-amino-acid chain: Lens fiber major intrinsic protein (262 aa).

Topologically, residues 1 to 9 (MRELRSSSF) are cytoplasmic. The helical transmembrane segment at 10-29 (WRAILAEFLGSLLYTLLGLG) threads the bilayer. The Extracellular segment spans residues 30–41 (ASLRWAPGPHGV). A helical transmembrane segment spans residues 42–59 (LGSALAFGLAQATLVQAL). The Cytoplasmic segment spans residues 60 to 61 (GH). An intramembrane region (discontinuously helical) is located at residues 62-77 (VSGGHINPAITLAFLL). The NPA 1 signature appears at 68-70 (NPA). Residues 78-82 (ASQLS) are Cytoplasmic-facing. A helical transmembrane segment spans residues 83–106 (LPRALGYLLAQLLGALAGAGVLYG). The Extracellular portion of the chain corresponds to 107–127 (VTPAAVRGTLGLSALHPSVGP). The chain crosses the membrane as a helical span at residues 128–148 (GQGTVVELLLTAQFILCVFAS). Residues 149-156 (FDDRHDGR) are Cytoplasmic-facing. A helical membrane pass occupies residues 157–175 (PGSAALPVGFSLALGHLFG). The Extracellular segment spans residues 176-178 (IPF). Positions 179–193 (TGAGMNPARSFAPAV) form an intramembrane region, discontinuously helical. Positions 184 to 186 (NPA) match the NPA 2 motif. Over 194–200 (ITRNFTN) the chain is Extracellular. The helical transmembrane segment at 201–222 (HWVFWAGPLLGAALAALLYELA) threads the bilayer. The Cytoplasmic segment spans residues 223–262 (LCPRARSMAERLAVLRGEPPAAAPPPEPPAEPLELKTQGL). The segment at 227-237 (ARSMAERLAVL) is interaction with CALM. The segment at 240–262 (EPPAAAPPPEPPAEPLELKTQGL) is disordered. Pro residues predominate over residues 243–253 (AAAPPPEPPAE).

It belongs to the MIP/aquaporin (TC 1.A.8) family. In terms of assembly, homotetramer; each monomer provides an independent water pore. Two homotetramers on opposing membranes can dimerize, forming a cell-cell junction. Interacts with CALM; the calcium-calmodulin/CALM complex interacts with the cytoplasmic domains of two aquaporins, leading to channel closure. During early stages of lens development, interacts through its C-terminal region with Cx56 and GJA8/Cx45.6. As to expression, major component of lens fiber gap junctions.

The protein resides in the cell membrane. It localises to the cell junction. It catalyses the reaction H2O(in) = H2O(out). The water channel activity is inhibited by calcium through calmodulin/CALM. Functionally, aquaporins form homotetrameric transmembrane channels, with each monomer independently mediating water transport across the plasma membrane along its osmotic gradient. Specifically expressed in lens fiber cells, this aquaporin is crucial for maintaining lens water homeostasis and transparency. Beyond water permeability, it also acts as a cell-to-cell adhesion molecule, forming thin junctions between lens fiber cells that are essential for maintaining the ordered structure and transparency of the lens. The protein is Lens fiber major intrinsic protein of Gallus gallus (Chicken).